The sequence spans 235 residues: Enolase-phosphatase E1 (235 aa).

Belongs to the HAD-like hydrolase superfamily. MasA/MtnC family. As to quaternary structure, monomer. Mg(2+) serves as cofactor.

It catalyses the reaction 5-methylsulfanyl-2,3-dioxopentyl phosphate + H2O = 1,2-dihydroxy-5-(methylsulfanyl)pent-1-en-3-one + phosphate. It functions in the pathway amino-acid biosynthesis; L-methionine biosynthesis via salvage pathway; L-methionine from S-methyl-5-thio-alpha-D-ribose 1-phosphate: step 3/6. The protein operates within amino-acid biosynthesis; L-methionine biosynthesis via salvage pathway; L-methionine from S-methyl-5-thio-alpha-D-ribose 1-phosphate: step 4/6. Its function is as follows. Bifunctional enzyme that catalyzes the enolization of 2,3-diketo-5-methylthiopentyl-1-phosphate (DK-MTP-1-P) into the intermediate 2-hydroxy-3-keto-5-methylthiopentenyl-1-phosphate (HK-MTPenyl-1-P), which is then dephosphorylated to form the acireductone 1,2-dihydroxy-3-keto-5-methylthiopentene (DHK-MTPene). In Parvibaculum lavamentivorans (strain DS-1 / DSM 13023 / NCIMB 13966), this protein is Enolase-phosphatase E1.